Reading from the N-terminus, the 158-residue chain is Transcriptional repressor NrdR (158 aa).

A zinc finger lies at 3–34; the sequence is CPFCGNADTQVVDSRVSEEGDTIRRRRRCLSC. The region spanning 49-139 is the ATP-cone domain; the sequence is PSVVKRNGSR…VYKNFEDIGE (91 aa).

This sequence belongs to the NrdR family. The cofactor is Zn(2+).

Its function is as follows. Negatively regulates transcription of bacterial ribonucleotide reductase nrd genes and operons by binding to NrdR-boxes. The chain is Transcriptional repressor NrdR from Bordetella petrii (strain ATCC BAA-461 / DSM 12804 / CCUG 43448).